The following is a 354-amino-acid chain: Rhodopsin (354 aa).

Over 1 to 36 (MNGTEGPYFYIPMVNTTGIVRSPYDYPQYYLVNPAA) the chain is Extracellular. N-linked (GlcNAc...) asparagine glycosylation is found at Asn2 and Asn15. A helical membrane pass occupies residues 37–61 (YAALGAYMFFLILVGFPINFLTLYV). Residues 62–73 (TIEHKKLRTPLN) are Cytoplasmic-facing. A helical membrane pass occupies residues 74-96 (YILLNLAVANLFMVFGGFTTTMY). Over 97–110 (TSMHGYFVLGRLGC) the chain is Extracellular. Residues Cys110 and Cys187 are joined by a disulfide bond. Residues 111 to 133 (NLEGFFATLGGEIALWSLVVLAV) traverse the membrane as a helical segment. A 'Ionic lock' involved in activated form stabilization motif is present at residues 134-136 (ERW). The Cytoplasmic portion of the chain corresponds to 134–152 (ERWMVVCKPISNFRFGENH). A helical membrane pass occupies residues 153–173 (AIMGLAMTWLMASACAVPPLV). Residues 174–202 (GWSRYIPEGMQCSCGVDYYTRAEGFNNES) are Extracellular-facing. The N-linked (GlcNAc...) asparagine glycan is linked to Asn200. The chain crosses the membrane as a helical span at residues 203–224 (FVVYMFCCHFMIPLIIVFFCYG). At 225 to 252 (RLLCAVKEAAAAQQESETTQRAEREVTR) the chain is on the cytoplasmic side. Residues 253–274 (MVVIMVIAFLVCWLPYASVAWW) traverse the membrane as a helical segment. The Extracellular portion of the chain corresponds to 275–286 (IFTHQGSEFGPV). Residues 287–308 (FMTIPAFFAKSSSIYNPMIYIC) form a helical membrane-spanning segment. An N6-(retinylidene)lysine modification is found at Lys296. Residues 309-354 (MNKQFRNCMITTLCCGKNPFEEEEGASSTASKTEASSVSSSSVSPA) are Cytoplasmic-facing. 2 S-palmitoyl cysteine lipidation sites follow: Cys322 and Cys323. Positions 329-354 (EEEEGASSTASKTEASSVSSSSVSPA) are disordered. Over residues 334–354 (ASSTASKTEASSVSSSSVSPA) the composition is skewed to low complexity.

It belongs to the G-protein coupled receptor 1 family. Opsin subfamily. Post-translationally, phosphorylated on some or all of the serine and threonine residues present in the C-terminal region. Contains one covalently linked retinal chromophore.

It is found in the membrane. The protein resides in the cell projection. It localises to the cilium. The protein localises to the photoreceptor outer segment. In terms of biological role, photoreceptor required for image-forming vision at low light intensity. While most salt water fish species use retinal as chromophore, most freshwater fish use 3-dehydroretinal, or a mixture of retinal and 3-dehydroretinal. Light-induced isomerization of 11-cis to all-trans retinal triggers a conformational change that activates signaling via G-proteins. Subsequent receptor phosphorylation mediates displacement of the bound G-protein alpha subunit by arrestin and terminates signaling. In Mullus surmuletus (Striped red mullet), this protein is Rhodopsin (rho).